Consider the following 343-residue polypeptide: tRNA N6-adenosine threonylcarbamoyltransferase (343 aa).

Histidine 111 and histidine 115 together coordinate Fe cation. Substrate is bound by residues valine 135–glycine 139, aspartate 168, glycine 181, and asparagine 280. Residue aspartate 306 participates in Fe cation binding.

Belongs to the KAE1 / TsaD family. It depends on Fe(2+) as a cofactor.

The protein localises to the cytoplasm. It carries out the reaction L-threonylcarbamoyladenylate + adenosine(37) in tRNA = N(6)-L-threonylcarbamoyladenosine(37) in tRNA + AMP + H(+). Required for the formation of a threonylcarbamoyl group on adenosine at position 37 (t(6)A37) in tRNAs that read codons beginning with adenine. Is involved in the transfer of the threonylcarbamoyl moiety of threonylcarbamoyl-AMP (TC-AMP) to the N6 group of A37, together with TsaE and TsaB. TsaD likely plays a direct catalytic role in this reaction. The protein is tRNA N6-adenosine threonylcarbamoyltransferase of Protochlamydia amoebophila (strain UWE25).